Reading from the N-terminus, the 256-residue chain is 5-keto-4-deoxy-D-glucarate aldolase (256 aa).

His50 acts as the Proton acceptor in catalysis. Gln151 contributes to the substrate binding site. Glu153 contacts Mg(2+). The substrate site is built by Ser178 and Asp179. Asp179 contributes to the Mg(2+) binding site.

This sequence belongs to the HpcH/HpaI aldolase family. KDGluc aldolase subfamily. In terms of assembly, homohexamer; trimer of dimers. Mg(2+) serves as cofactor.

It catalyses the reaction 5-dehydro-4-deoxy-D-glucarate = 2-hydroxy-3-oxopropanoate + pyruvate. The catalysed reaction is 2-dehydro-3-deoxy-D-glucarate = 2-hydroxy-3-oxopropanoate + pyruvate. The protein operates within carbohydrate acid metabolism; galactarate degradation; D-glycerate from galactarate: step 2/3. Functionally, catalyzes the reversible retro-aldol cleavage of both 5-keto-4-deoxy-D-glucarate and 2-keto-3-deoxy-D-glucarate to pyruvate and tartronic semialdehyde. The protein is 5-keto-4-deoxy-D-glucarate aldolase of Salmonella paratyphi A (strain ATCC 9150 / SARB42).